Reading from the N-terminus, the 99-residue chain is Large ribosomal subunit protein uL23 (99 aa).

The protein belongs to the universal ribosomal protein uL23 family. In terms of assembly, part of the 50S ribosomal subunit. Contacts protein L29, and trigger factor when it is bound to the ribosome.

Functionally, one of the early assembly proteins it binds 23S rRNA. One of the proteins that surrounds the polypeptide exit tunnel on the outside of the ribosome. Forms the main docking site for trigger factor binding to the ribosome. In Hyphomonas neptunium (strain ATCC 15444), this protein is Large ribosomal subunit protein uL23.